A 355-amino-acid chain; its full sequence is Protein HGH1 homolog (355 aa).

A disordered region spans residues 324 to 355; it reads DEEGDPTPEEIEQMNKKQKLEDEDAQFETDEI. Composition is skewed to acidic residues over residues 325 to 335 and 344 to 355; these read EEGDPTPEEIE and EDEDAQFETDEI.

The protein belongs to the HGH1 family.

The polypeptide is Protein HGH1 homolog (Dictyostelium discoideum (Social amoeba)).